The following is a 417-amino-acid chain: Lissencephaly-1 homolog (417 aa).

The LisH domain occupies 7–39 (QKEELNRAIADYLFANGYVKALNAFREESQLAG). The stretch at 54–86 (TSVIRLQKKVMDLEAKLNEAEKEFQSMQNAIGF) forms a coiled coil. 7 WD repeats span residues 120-159 (GHRSPITRVLFHPHYNVFVSASEDASIKVWDYETGEFEHT), 162-203 (GHTD…KTLT), 204-243 (GHDHNVSSVAFLPSGDFLVSASRDKTIKMWEVSTGYCTKT), 246-285 (GHTEWIRSVRPSPEGNLLASCSNDHTIRIWSVESRECQVV), 288-340 (GHEH…CLFV), 343-382 (GHDNWVRQLVFHPHGRLLLSASDDKTIRVWDLKNRRCHKT), and 385-417 (AHSHFVTSLDVNRLAPYAITGSVDQTIHIWDCR).

This sequence belongs to the WD repeat LIS1/nudF family.

The protein resides in the cytoplasm. The protein localises to the cytoskeleton. It localises to the microtubule organizing center. Its subcellular location is the centrosome. Positively regulates the activity of the minus-end directed microtubule motor protein dynein. May enhance dynein-mediated microtubule sliding by targeting dynein to the microtubule plus end. Required for several dynein- and microtubule-dependent processes. This chain is Lissencephaly-1 homolog, found in Schistosoma mansoni (Blood fluke).